Here is a 283-residue protein sequence, read N- to C-terminus: Acetylglutamate kinase (283 aa).

Substrate-binding positions include 64-65 (GG), R86, and N178.

The protein belongs to the acetylglutamate kinase family. ArgB subfamily.

It localises to the cytoplasm. The catalysed reaction is N-acetyl-L-glutamate + ATP = N-acetyl-L-glutamyl 5-phosphate + ADP. It participates in amino-acid biosynthesis; L-arginine biosynthesis; N(2)-acetyl-L-ornithine from L-glutamate: step 2/4. Functionally, catalyzes the ATP-dependent phosphorylation of N-acetyl-L-glutamate. This chain is Acetylglutamate kinase, found in Lactococcus lactis subsp. lactis (strain IL1403) (Streptococcus lactis).